The sequence spans 450 residues: Pancreatic triacylglycerol lipase (450 aa).

3 disulfide bridges follow: cysteine 4-cysteine 10, cysteine 91-cysteine 102, and cysteine 91-cysteine 104. The active-site Nucleophile is serine 153. Residue asparagine 167 is glycosylated (N-linked (GlcNAc...) asparagine). Residue aspartate 177 is the Charge relay system of the active site. 4 residues coordinate Ca(2+): glutamate 188, arginine 191, aspartate 193, and aspartate 196. A disulfide bond links cysteine 238 and cysteine 262. The active-site Charge relay system is the histidine 264. Cystine bridges form between cysteine 286–cysteine 297, cysteine 300–cysteine 305, and cysteine 434–cysteine 450. The 112-residue stretch at tryptophan 339–cysteine 450 folds into the PLAT domain.

The protein belongs to the AB hydrolase superfamily. Lipase family. In terms of assembly, forms a 1:1 stoichiometric complex with (pro)colipase/CLPS.

The protein localises to the secreted. It carries out the reaction a triacylglycerol + H2O = a diacylglycerol + a fatty acid + H(+). The enzyme catalyses 1,2,3-tributanoylglycerol + H2O = dibutanoylglycerol + butanoate + H(+). It catalyses the reaction 1,2,3-tri-(9Z-octadecenoyl)-glycerol + H2O = di-(9Z)-octadecenoylglycerol + (9Z)-octadecenoate + H(+). The catalysed reaction is all-trans-retinyl hexadecanoate + H2O = all-trans-retinol + hexadecanoate + H(+). It carries out the reaction 1,2-di-(9Z-octadecenoyl)-glycerol + H2O = (9Z-octadecenoyl)-glycerol + (9Z)-octadecenoate + H(+). Its activity is regulated as follows. Inhibited by bile salts, is reactivated by (pro)colipase/CLPS. Plays an important role in fat metabolism. It preferentially splits the esters of long-chain fatty acids at positions 1 and 3, producing mainly 2-monoacylglycerol and free fatty acids, and shows considerably higher activity against insoluble emulsified substrates than against soluble ones. The polypeptide is Pancreatic triacylglycerol lipase (PNLIP) (Sus scrofa (Pig)).